The primary structure comprises 123 residues: MTQFKRADRVADLVKMEIADILLRRIRDPRVSRLTVTGVKVSDDLRTARIFFVEMGEDSCHPETLEGLQKAGGFIRKELGKRLKLRYVPDLIFKPDSSFAYGSRIDQLINEIHREEENDGSDT.

This sequence belongs to the RbfA family. In terms of assembly, monomer. Binds 30S ribosomal subunits, but not 50S ribosomal subunits or 70S ribosomes.

The protein resides in the cytoplasm. In terms of biological role, one of several proteins that assist in the late maturation steps of the functional core of the 30S ribosomal subunit. Associates with free 30S ribosomal subunits (but not with 30S subunits that are part of 70S ribosomes or polysomes). Required for efficient processing of 16S rRNA. May interact with the 5'-terminal helix region of 16S rRNA. The chain is Ribosome-binding factor A from Syntrophus aciditrophicus (strain SB).